The chain runs to 324 residues: ATP synthase mitochondrial F1 complex assembly factor 1 (324 aa).

The transit peptide at 1 to 54 (MAAVVSAAGGACPAVLQVAGLYRGLCAVRSRALGLGFVSPAQLRVFPVRRGSGL) directs the protein to the mitochondrion.

This sequence belongs to the ATP11 family. In terms of assembly, interacts with ATP5F1B; involved in the assembly of the F1 component of the mitochondrial ATP synthase (ATPase). In terms of tissue distribution, widely expressed but with low level.

It localises to the mitochondrion inner membrane. Functionally, has a complex stabilizing activity in the assembly of the mitochondrial F1-F0 complex. In Mus musculus (Mouse), this protein is ATP synthase mitochondrial F1 complex assembly factor 1.